A 397-amino-acid chain; its full sequence is N-acetyllactosaminide beta-1,3-N-acetylglucosaminyltransferase 2 (397 aa).

Residues 1 to 7 are Cytoplasmic-facing; sequence MSVGRRR. Residues 8 to 28 form a helical; Signal-anchor for type II membrane protein membrane-spanning segment; that stretch reads IKLLGILMMANVFIYFIMEVS. The Lumenal portion of the chain corresponds to 29 to 397; that stretch reads KSSSQEKNGK…SQLQSAHLKC (369 aa). N-linked (GlcNAc...) asparagine glycans are attached at residues asparagine 79, asparagine 89, asparagine 127, asparagine 173, and asparagine 219.

The protein belongs to the glycosyltransferase 31 family. In terms of assembly, interacts with B3GNT8; this interaction greatly increases B3GNT2 catalytic activity, independently of B3GNT8 enzymatic activity. Requires Mn(2+) as cofactor. As to expression, ubiquitous.

Its subcellular location is the golgi apparatus membrane. It carries out the reaction a beta-D-galactosyl-(1-&gt;4)-N-acetyl-beta-D-glucosaminyl derivative + UDP-N-acetyl-alpha-D-glucosamine = an N-acetyl-beta-D-glucosaminyl-(1-&gt;3)-beta-D-galactosyl-(1-&gt;4)-N-acetyl-beta-D-glucosaminyl derivative + UDP + H(+). It functions in the pathway protein modification; protein glycosylation. Beta-1,3-N-acetylglucosaminyltransferase involved in the synthesis of poly-N-acetyllactosamine. Catalyzes the initiation and elongation of poly-N-acetyllactosamine chains. Shows a marked preference for Gal(beta1-4)Glc(NAc)-based acceptors. Probably constitutes the main polylactosamine synthase. This chain is N-acetyllactosaminide beta-1,3-N-acetylglucosaminyltransferase 2 (B3GNT2), found in Homo sapiens (Human).